A 317-amino-acid polypeptide reads, in one-letter code: Aspartate carbamoyltransferase catalytic subunit (317 aa).

Residues Arg-66 and Thr-67 each contribute to the carbamoyl phosphate site. L-aspartate is bound at residue Lys-94. Residues Arg-116, His-144, and Gln-147 each coordinate carbamoyl phosphate. Positions 177 and 231 each coordinate L-aspartate. Residues Gly-272 and Pro-273 each contribute to the carbamoyl phosphate site.

This sequence belongs to the aspartate/ornithine carbamoyltransferase superfamily. ATCase family. As to quaternary structure, heterododecamer (2C3:3R2) of six catalytic PyrB chains organized as two trimers (C3), and six regulatory PyrI chains organized as three dimers (R2).

It catalyses the reaction carbamoyl phosphate + L-aspartate = N-carbamoyl-L-aspartate + phosphate + H(+). It functions in the pathway pyrimidine metabolism; UMP biosynthesis via de novo pathway; (S)-dihydroorotate from bicarbonate: step 2/3. Catalyzes the condensation of carbamoyl phosphate and aspartate to form carbamoyl aspartate and inorganic phosphate, the committed step in the de novo pyrimidine nucleotide biosynthesis pathway. This chain is Aspartate carbamoyltransferase catalytic subunit, found in Rhodopseudomonas palustris (strain HaA2).